A 267-amino-acid chain; its full sequence is N-acetylgalactosamine permease IIC component 1 (267 aa).

The Periplasmic portion of the chain corresponds to 1–10 (MHEITLLQGL). The PTS EIIC type-4 domain maps to 1-237 (MHEITLLQGL…VAVLGAGFAV (237 aa)). The helical transmembrane segment at 11-31 (SLAALVFVLGIDFWLEALFLF) threads the bilayer. At 32–33 (RP) the chain is on the cytoplasmic side. Residues 34–54 (IIVCTLTGAILGDIQTGLITG) traverse the membrane as a helical segment. Residues 55 to 66 (GLTELAFAGLTP) are Periplasmic-facing. A helical membrane pass occupies residues 67–87 (AGGVQPPNPIMAGLMTTVIAW). Residues 88-94 (STGVDAK) are Cytoplasmic-facing. The helical transmembrane segment at 95–115 (TAIGLGLPFSLLMQYVILFFY) threads the bilayer. The Periplasmic segment spans residues 116–141 (SAFSLFMTKADKCAKEADTAAFSRLN). Residues 142–162 (WTTMLIVASAYAVIAFLCTYL) traverse the membrane as a helical segment. Residues 163-177 (AQGAMQALVKAMPAW) lie on the Cytoplasmic side of the membrane. Residues 178 to 198 (LTHGFEVAGGILPAVGFGLLL) traverse the membrane as a helical segment. Topologically, residues 199 to 209 (RVMFKAQYIPY) are periplasmic. Residues 210 to 230 (LIAGFLFVCYIQVSNLLPVAV) traverse the membrane as a helical segment. Residues 231–267 (LGAGFAVYEFFNAKSRQQAQPQPVASKNEEEDYSNGI) are Cytoplasmic-facing.

The protein resides in the cell inner membrane. Functionally, the phosphoenolpyruvate-dependent sugar phosphotransferase system (PTS), a major carbohydrate active -transport system, catalyzes the phosphorylation of incoming sugar substrates concomitant with their translocation across the cell membrane. This system is involved in N-acetylgalactosamine transport. The protein is N-acetylgalactosamine permease IIC component 1 (agaC) of Escherichia coli (strain K12).